We begin with the raw amino-acid sequence, 261 residues long: 3-methyl-2-oxobutanoate hydroxymethyltransferase (261 aa).

Mg(2+) contacts are provided by aspartate 42 and aspartate 81. 3-methyl-2-oxobutanoate is bound by residues 42–43 (DS), aspartate 81, and lysine 110. Glutamate 112 serves as a coordination point for Mg(2+). The active-site Proton acceptor is the glutamate 179.

It belongs to the PanB family. As to quaternary structure, homodecamer; pentamer of dimers. Mg(2+) is required as a cofactor.

The protein resides in the cytoplasm. It carries out the reaction 3-methyl-2-oxobutanoate + (6R)-5,10-methylene-5,6,7,8-tetrahydrofolate + H2O = 2-dehydropantoate + (6S)-5,6,7,8-tetrahydrofolate. Its pathway is cofactor biosynthesis; (R)-pantothenate biosynthesis; (R)-pantoate from 3-methyl-2-oxobutanoate: step 1/2. Catalyzes the reversible reaction in which hydroxymethyl group from 5,10-methylenetetrahydrofolate is transferred onto alpha-ketoisovalerate to form ketopantoate. This Thermus thermophilus (strain ATCC BAA-163 / DSM 7039 / HB27) protein is 3-methyl-2-oxobutanoate hydroxymethyltransferase.